A 90-amino-acid polypeptide reads, in one-letter code: DNA-binding protein HU-alpha (90 aa).

It belongs to the bacterial histone-like protein family. In terms of assembly, heterodimer of an alpha and a beta chain.

Its function is as follows. Histone-like DNA-binding protein which is capable of wrapping DNA to stabilize it, and thus to prevent its denaturation under extreme environmental conditions. This is DNA-binding protein HU-alpha (hupA) from Escherichia coli O157:H7.